Reading from the N-terminus, the 78-residue chain is Putative membrane protein insertion efficiency factor (78 aa).

It belongs to the UPF0161 family.

Its subcellular location is the cell membrane. Could be involved in insertion of integral membrane proteins into the membrane. The protein is Putative membrane protein insertion efficiency factor of Bacillus anthracis (strain A0248).